Here is a 159-residue protein sequence, read N- to C-terminus: RNA pyrophosphohydrolase (159 aa).

The region spanning 6–149 is the Nudix hydrolase domain; that stretch reads GFRPNVGIIL…KREVYRRALK (144 aa). Positions 38 to 59 match the Nudix box motif; that stretch reads GGINPDETPEDALYRELNEEVG.

This sequence belongs to the Nudix hydrolase family. RppH subfamily. Requires a divalent metal cation as cofactor.

In terms of biological role, accelerates the degradation of transcripts by removing pyrophosphate from the 5'-end of triphosphorylated RNA, leading to a more labile monophosphorylated state that can stimulate subsequent ribonuclease cleavage. In Pseudomonas fluorescens (strain SBW25), this protein is RNA pyrophosphohydrolase.